The sequence spans 216 residues: uncharacterized protein (216 aa).

Over residues 182–193 (STSNASVNSDDA) the composition is skewed to polar residues. A disordered region spans residues 182-204 (STSNASVNSDDASTAELGPTSEE).

This is an uncharacterized protein from Caenorhabditis elegans.